Here is a 113-residue protein sequence, read N- to C-terminus: Nucleoid-associated protein RHA1_ro04210 (113 aa).

Belongs to the YbaB/EbfC family. As to quaternary structure, homodimer.

The protein localises to the cytoplasm. It is found in the nucleoid. Binds to DNA and alters its conformation. May be involved in regulation of gene expression, nucleoid organization and DNA protection. The polypeptide is Nucleoid-associated protein RHA1_ro04210 (Rhodococcus jostii (strain RHA1)).